The primary structure comprises 207 residues: Protein YABBY 6 (207 aa).

The segment at 16–43 adopts a C4-type zinc-finger fold; the sequence is CNFCNTILAVSVPGNSMLNIVTVRCGHC.

This sequence belongs to the YABBY family. As to expression, expressed in leaf blades, leaf sheaths and flowers.

The protein resides in the nucleus. The polypeptide is Protein YABBY 6 (YAB6) (Oryza sativa subsp. japonica (Rice)).